The primary structure comprises 203 residues: Small ribosomal subunit protein uS4 (203 aa).

Residues 93-155 (RRLDSIVYRL…SKNLQQIRDA (63 aa)) enclose the S4 RNA-binding domain.

This sequence belongs to the universal ribosomal protein uS4 family. In terms of assembly, part of the 30S ribosomal subunit. Contacts protein S5. The interaction surface between S4 and S5 is involved in control of translational fidelity.

Functionally, one of the primary rRNA binding proteins, it binds directly to 16S rRNA where it nucleates assembly of the body of the 30S subunit. In terms of biological role, with S5 and S12 plays an important role in translational accuracy. This chain is Small ribosomal subunit protein uS4, found in Lactobacillus acidophilus (strain ATCC 700396 / NCK56 / N2 / NCFM).